Reading from the N-terminus, the 436-residue chain is Mannitol-binding protein (436 aa).

The first 22 residues, 1–22 (MNDSIKACLAAACLALPLLAQG), serve as a signal peptide directing secretion.

This sequence belongs to the bacterial solute-binding protein 1 family.

The protein localises to the periplasm. In terms of biological role, binds mannitol with high affinity. The polypeptide is Mannitol-binding protein (Pseudomonas aeruginosa (strain ATCC 15692 / DSM 22644 / CIP 104116 / JCM 14847 / LMG 12228 / 1C / PRS 101 / PAO1)).